The primary structure comprises 431 residues: Glutamate--tRNA ligase 1 (431 aa).

The 'HIGH' region motif lies at 6–16; it reads PSPTGDMHIGN. A 'KMSKS' region motif is present at residues 235-239; sequence KMSKR. Lys238 provides a ligand contact to ATP.

It belongs to the class-I aminoacyl-tRNA synthetase family. Glutamate--tRNA ligase type 1 subfamily. As to quaternary structure, monomer.

It localises to the cytoplasm. The catalysed reaction is tRNA(Glu) + L-glutamate + ATP = L-glutamyl-tRNA(Glu) + AMP + diphosphate. In terms of biological role, catalyzes the attachment of glutamate to tRNA(Glu) in a two-step reaction: glutamate is first activated by ATP to form Glu-AMP and then transferred to the acceptor end of tRNA(Glu). In Campylobacter jejuni (strain RM1221), this protein is Glutamate--tRNA ligase 1.